A 552-amino-acid polypeptide reads, in one-letter code: MDGVVTDLITVGLKRGSDELLSSGIINGPFTMNSSTPSTANGNDSKKFKRDRPPCSPSRVLHLRKIPCDVTEAEIISLGLPFGKVTNLLMLKGKSQAFLEMASEEAAVTMVNYYTPITPHLRSQPVYIQYSNHRELKTDNLPNQARAQAALQAVSAVQSGSLALSGGPSNEGTVLPGQSPVLRIIIENLFYPVTLEVLHQIFSKFGTVLKIITFTKNNQFQALLQYADPVNAHYAKMALDGQNIYNACCTLRIDFSKLTSLNVKYNNDKSRDFTRLDLPTGDGQPSLEPPMAAAFGAPGIISSPYAGAAGFAPAIGFPQATGLSVPAVPGALGPLTITSSAVTGRMAIPGASGIPGNSVLLVTNLNPDLITPHGLFILFGVYGDVHRVKIMFNKKENALVQMADANQAQLAMNHLSGQRLYGKVLRATLSKHQAVQLPREGQEDQGLTKDFSNSPLHRFKKPGSKNFQNIFPPSATLHLSNIPPSVTVDDLKNLFIEAGCSVKAFKFFQKDRKMALIQLGSVEEAIQALIELHNHDLGENHHLRVSFSKSTI.

The residue at position 1 (Met1) is an N-acetylmethionine. Ser17 carries the post-translational modification Phosphoserine. The span at 32-43 (MNSSTPSTANGN) shows a compositional bias: polar residues. Positions 32 to 55 (MNSSTPSTANGNDSKKFKRDRPPC) are disordered. 3 consecutive RRM domains span residues 59–143 (RVLH…NLPN), 182–258 (LRII…FSKL), and 358–432 (SVLL…LSKH). Lys65 participates in a covalent cross-link: Glycyl lysine isopeptide (Lys-Gly) (interchain with G-Cter in SUMO2). Position 127 is a phosphotyrosine (Tyr127). Thr138 carries the post-translational modification Phosphothreonine. Residue Lys216 forms a Glycyl lysine isopeptide (Lys-Gly) (interchain with G-Cter in SUMO2) linkage. Lys423 is modified (N6-acetyllysine). The segment at 435–455 (VQLPREGQEDQGLTKDFSNSP) is disordered. Ser454 is subject to Phosphoserine. In terms of domain architecture, RRM 4 spans 475–550 (ATLHLSNIPP…HHLRVSFSKS (76 aa)).

As to quaternary structure, interacts with THBS4 (via the acidic amphipathic C-terminus). As to expression, expressed in several hematopoietic cell lines examined.

Its function is as follows. RNA-binding protein that mediates pre-mRNA alternative splicing regulation. Plays a role in the regulation of cell proliferation, differentiation and migration. Positive regulator of EPO-dependent erythropoiesis. Participates in cell differentiation regulation by repressing tissue-specific exons. Promotes FAS exon 6 skipping. Binds RNA, preferentially to both poly(G) and poly(U). The polypeptide is Polypyrimidine tract-binding protein 3 (PTBP3) (Homo sapiens (Human)).